A 335-amino-acid polypeptide reads, in one-letter code: Cell division protein ZipA (335 aa).

The Periplasmic portion of the chain corresponds to 1–4; that stretch reads MDLN. A helical membrane pass occupies residues 5–25; that stretch reads AILIILGVIALIILVAHGIWS. At 26–335 the chain is on the cytoplasmic side; it reads NRREKSQYFE…AERDYLARVS (310 aa).

Belongs to the ZipA family. As to quaternary structure, interacts with FtsZ via their C-terminal domains.

The protein localises to the cell inner membrane. Its function is as follows. Essential cell division protein that stabilizes the FtsZ protofilaments by cross-linking them and that serves as a cytoplasmic membrane anchor for the Z ring. Also required for the recruitment to the septal ring of downstream cell division proteins. The chain is Cell division protein ZipA from Histophilus somni (strain 2336) (Haemophilus somnus).